Reading from the N-terminus, the 280-residue chain is uncharacterized protein (280 aa).

This sequence to E.coli YgfZ (UP14) and B.aphidicola (subsp. Acyrthosiphon pisum) BU435.

This is an uncharacterized protein from Haemophilus influenzae (strain ATCC 51907 / DSM 11121 / KW20 / Rd).